The sequence spans 358 residues: Sulfate/thiosulfate import ATP-binding protein CysA 1 (358 aa).

The ABC transporter domain occupies 3 to 237 (IQVENIRKAF…PASAFVYGFL (235 aa)). Residue 35-42 (GPSGCGKT) participates in ATP binding.

It belongs to the ABC transporter superfamily. Sulfate/tungstate importer (TC 3.A.1.6) family. The complex is composed of two ATP-binding proteins (CysA), two transmembrane proteins (CysT and CysW) and a solute-binding protein (CysP).

The protein resides in the cell inner membrane. The catalysed reaction is sulfate(out) + ATP + H2O = sulfate(in) + ADP + phosphate + H(+). It carries out the reaction thiosulfate(out) + ATP + H2O = thiosulfate(in) + ADP + phosphate + H(+). Its function is as follows. Part of the ABC transporter complex CysAWTP involved in sulfate/thiosulfate import. Responsible for energy coupling to the transport system. The sequence is that of Sulfate/thiosulfate import ATP-binding protein CysA 1 from Chromobacterium violaceum (strain ATCC 12472 / DSM 30191 / JCM 1249 / CCUG 213 / NBRC 12614 / NCIMB 9131 / NCTC 9757 / MK).